The sequence spans 20 residues: Toxin CpTx-4a (20 aa).

It belongs to the spider toxin CSTX family. In terms of tissue distribution, expressed by the venom gland.

It is found in the secreted. Spider venom toxin that exhibits cytolytic activity by forming an alpha-helix across the membrane. Lethal to insect larvae. In Cheiracanthium punctorium (Yellow sac spider), this protein is Toxin CpTx-4a.